We begin with the raw amino-acid sequence, 470 residues long: ADAM DEC1 (470 aa).

Residues 1 to 30 (MLRGISQLPAVATMSWVLLPVLWLIVQTQA) form the signal peptide. A propeptide spanning residues 31–205 (IAIKQTPELT…QGPIRISRSL (175 aa)) is cleaved from the precursor. An N-linked (GlcNAc...) asparagine glycan is attached at Asn61. Positions 173–200 (FTSNQEEQDPANHTCGVKSTDGKQGPIR) are disordered. A glycan (N-linked (GlcNAc...) (complex) asparagine) is linked at Asn184. Positions 218–412 (KYIDLYLVLD…QKPKCLLQAP (195 aa)) constitute a Peptidase M12B domain. A glycan (N-linked (GlcNAc...) asparagine) is linked at Asn237. Disulfide bonds link Cys328–Cys407 and Cys369–Cys374. Position 352 (His352) interacts with Zn(2+). The active site involves Glu353. Zn(2+) contacts are provided by His356 and Asp362. The 51-residue stretch at 420-470 (TPVCGNHLLEVGEDCDCGSPKECTNLCCEALTCKLKPGTDCGGDAPNHTTE) folds into the Disintegrin domain. N-linked (GlcNAc...) asparagine glycosylation occurs at Asn466.

It depends on Zn(2+) as a cofactor. In terms of tissue distribution, expressed highly in the small intestine and appendix, moderately in lymph node, mucosal lining of the colon, thymus, spleen and very weakly in the bone marrow. Predominantly expressed in dendritic cells (DC) of the germinal center. Weakly expressed in monocyte and highly expressed in macrophage. Absent in immature DC.

Its subcellular location is the secreted. Functionally, may play an important role in the control of the immune response and during pregnancy. The sequence is that of ADAM DEC1 (ADAMDEC1) from Homo sapiens (Human).